The primary structure comprises 290 residues: Cytochrome bo(3) ubiquinol oxidase subunit 2 (290 aa).

The N-terminal stretch at 1–24 is a signal peptide; it reads MISINFNNFFKTLLLILIAFTLHG. The N-palmitoyl cysteine moiety is linked to residue cysteine 25. Cysteine 25 carries S-diacylglycerol cysteine lipidation. At 25–42 the chain is on the extracellular side; that stretch reads CDSILFNPHGIIAIQECS. A helical membrane pass occupies residues 43–63; sequence ILLISFLIMLFVIIPVIFMTI. Residues 64–87 lie on the Cytoplasmic side of the membrane; the sequence is YFSVKYRASNINAKYKPDWCDSKK. A helical transmembrane segment spans residues 88–108; that stretch reads IEIIVWTIPISIILFLAFVTW. Residues 109 to 290 lie on the Extracellular side of the membrane; that stretch reads NYSHILDPKK…TYSKNKVFKH (182 aa).

The protein belongs to the cytochrome c oxidase subunit 2 family. As to quaternary structure, heterooctamer of two A chains, two B chains, two C chains and two D chains.

The protein resides in the cell membrane. Its function is as follows. Cytochrome bo(3) ubiquinol terminal oxidase is the component of the aerobic respiratory chain of E.coli that predominates when cells are grown at high aeration. Has proton pump activity across the membrane in addition to electron transfer, pumping 2 protons/electron. The protein is Cytochrome bo(3) ubiquinol oxidase subunit 2 (cyoA) of Buchnera aphidicola subsp. Schizaphis graminum (strain Sg).